A 911-amino-acid chain; its full sequence is Nitrate reductase [NADH], clone PBNBR1412 (911 aa).

Residues 53–72 (NDAVDDSYDSSDDEDESHNR) form a disordered region. Positions 56–68 (VDDSYDSSDDEDE) are enriched in acidic residues. Residue Cys191 participates in Mo-molybdopterin binding. The Cytochrome b5 heme-binding domain occupies 539–614 (AKMYSMSEVR…LEDYRIGELI (76 aa)). Heme contacts are provided by His574 and His597. The FAD-binding FR-type domain maps to 654–766 (REKVPVTLIE…KGPLGHIEYL (113 aa)). Residues 706-709 (RAYT), 723-727 (VVKVY), Phe728, Phe735, 740-742 (LMS), and Thr793 each bind FAD.

This sequence belongs to the nitrate reductase family. As to quaternary structure, homodimer. FAD serves as cofactor. Requires heme as cofactor. Mo-molybdopterin is required as a cofactor.

The catalysed reaction is nitrite + NAD(+) + H2O = nitrate + NADH + H(+). Functionally, nitrate reductase is a key enzyme involved in the first step of nitrate assimilation in plants, fungi and bacteria. This Brassica napus (Rape) protein is Nitrate reductase [NADH], clone PBNBR1412 (NIA2).